A 1211-amino-acid polypeptide reads, in one-letter code: DNA-directed RNA polymerase subunit beta' (1211 aa).

Positions 60, 62, 75, and 78 each coordinate Zn(2+). Residues aspartate 449, aspartate 451, and aspartate 453 each contribute to the Mg(2+) site. Positions 818, 892, 899, and 902 each coordinate Zn(2+).

The protein belongs to the RNA polymerase beta' chain family. As to quaternary structure, the RNAP catalytic core consists of 2 alpha, 1 beta, 1 beta' and 1 omega subunit. When a sigma factor is associated with the core the holoenzyme is formed, which can initiate transcription. Requires Mg(2+) as cofactor. It depends on Zn(2+) as a cofactor.

It catalyses the reaction RNA(n) + a ribonucleoside 5'-triphosphate = RNA(n+1) + diphosphate. Its function is as follows. DNA-dependent RNA polymerase catalyzes the transcription of DNA into RNA using the four ribonucleoside triphosphates as substrates. This is DNA-directed RNA polymerase subunit beta' from Limosilactobacillus reuteri (strain DSM 20016) (Lactobacillus reuteri).